The chain runs to 1377 residues: DNA-directed RNA polymerase subunit beta (1377 aa).

The protein belongs to the RNA polymerase beta chain family. In terms of assembly, the RNAP catalytic core consists of 2 alpha, 1 beta, 1 beta' and 1 omega subunit. When a sigma factor is associated with the core the holoenzyme is formed, which can initiate transcription.

It carries out the reaction RNA(n) + a ribonucleoside 5'-triphosphate = RNA(n+1) + diphosphate. DNA-dependent RNA polymerase catalyzes the transcription of DNA into RNA using the four ribonucleoside triphosphates as substrates. The sequence is that of DNA-directed RNA polymerase subunit beta from Orientia tsutsugamushi (strain Boryong) (Rickettsia tsutsugamushi).